Reading from the N-terminus, the 337-residue chain is Fructose-1,6-bisphosphatase class 1 (337 aa).

The Mg(2+) site is built by E91, D113, L115, and D116. Residues 116 to 119 (DGSS), N209, Y242, and K275 contribute to the substrate site. E281 serves as a coordination point for Mg(2+).

The protein belongs to the FBPase class 1 family. As to quaternary structure, homotetramer. It depends on Mg(2+) as a cofactor.

It localises to the cytoplasm. The enzyme catalyses beta-D-fructose 1,6-bisphosphate + H2O = beta-D-fructose 6-phosphate + phosphate. It functions in the pathway carbohydrate biosynthesis; gluconeogenesis. In Nitratidesulfovibrio vulgaris (strain DP4) (Desulfovibrio vulgaris), this protein is Fructose-1,6-bisphosphatase class 1.